Consider the following 147-residue polypeptide: uncharacterized protein (147 aa).

Residues 11 to 147 (NTSPGFLLWQ…SGLQELLKHE (137 aa)) form the HTH marR-type domain. The H-T-H motif DNA-binding region spans 61–84 (QKKLASFSQTNIMMVSEVVRTLEK).

This is an uncharacterized protein from Bacillus subtilis (strain 168).